A 200-amino-acid polypeptide reads, in one-letter code: MPIEFIATSKLPTAFGEFNISVFQDPVTGEEHVALSKGLENPPTGPVLVRVHSECLTGDAFASLKCDCGPQLQATQKLINEAGQGVILYLRQEGRGIGLTNKIRAYALQDQGHDTVDANLLLNLPADARRYDMCSIMLDHLKVKEVKLITNNPLKIQALKDQGINVVDRVPLTVGRNPFNEHYLKTKRERMDHLYQKDDF.

Residue 50 to 54 (RVHSE) participates in GTP binding. Zn(2+) is bound by residues C55, C66, and C68. GTP is bound by residues Q71, 93–95 (EGR), and T115. Residue D127 is the Proton acceptor of the active site. The active-site Nucleophile is R129. Residues T150 and K155 each contribute to the GTP site.

Belongs to the GTP cyclohydrolase II family. The cofactor is Zn(2+).

The enzyme catalyses GTP + 4 H2O = 2,5-diamino-6-hydroxy-4-(5-phosphoribosylamino)-pyrimidine + formate + 2 phosphate + 3 H(+). The protein operates within cofactor biosynthesis; riboflavin biosynthesis; 5-amino-6-(D-ribitylamino)uracil from GTP: step 1/4. Functionally, catalyzes the conversion of GTP to 2,5-diamino-6-ribosylamino-4(3H)-pyrimidinone 5'-phosphate (DARP), formate and pyrophosphate. In Acinetobacter baumannii (strain AB0057), this protein is GTP cyclohydrolase-2.